Reading from the N-terminus, the 526-residue chain is Hyaluronidase-5 (526 aa).

Residues 1–35 (MRVLYFKHSFFRSLLKSNGLPQTLLVFLLIPCYLT) form the signal peptide. Cystine bridges form between Cys-60–Cys-351, Cys-223–Cys-237, Cys-376–Cys-387, Cys-381–Cys-435, and Cys-437–Cys-443. The active-site Proton donor is Glu-147. N-linked (GlcNAc...) asparagine glycans are attached at residues Asn-165 and Asn-179.

This sequence belongs to the glycosyl hydrolase 56 family. As to expression, expressed in testis, epididymal sperm and epididymides (at protein level). Expressed at highest levels in testis with lesser amounts in epididymal sperm.

The protein localises to the cell membrane. The protein resides in the cytoplasmic vesicle. It is found in the secretory vesicle. It localises to the acrosome membrane. Its subcellular location is the secreted. It carries out the reaction Random hydrolysis of (1-&gt;4)-linkages between N-acetyl-beta-D-glucosamine and D-glucuronate residues in hyaluronate.. Its function is as follows. Catalyzes the hydrolysis of hyaluronan into smaller oligosaccharide fragments. Does not appear to be essential for fertilization. In Mus musculus (Mouse), this protein is Hyaluronidase-5.